We begin with the raw amino-acid sequence, 176 residues long: Ribosome maturation factor RimM (176 aa).

The region spanning 97 to 176 is the PRC barrel domain; it reads DNDFYHRDLI…QIVVDWDPDF (80 aa).

The protein belongs to the RimM family. As to quaternary structure, binds ribosomal protein uS19.

It localises to the cytoplasm. An accessory protein needed during the final step in the assembly of 30S ribosomal subunit, possibly for assembly of the head region. Essential for efficient processing of 16S rRNA. May be needed both before and after RbfA during the maturation of 16S rRNA. It has affinity for free ribosomal 30S subunits but not for 70S ribosomes. This is Ribosome maturation factor RimM from Shewanella denitrificans (strain OS217 / ATCC BAA-1090 / DSM 15013).